A 208-amino-acid polypeptide reads, in one-letter code: Small ribosomal subunit protein uS4 (208 aa).

The S4 RNA-binding domain occupies 97-158 (TRLDNVIYRM…RAQKYLCVQE (62 aa)).

The protein belongs to the universal ribosomal protein uS4 family. In terms of assembly, part of the 30S ribosomal subunit. Contacts protein S5. The interaction surface between S4 and S5 is involved in control of translational fidelity.

Its function is as follows. One of the primary rRNA binding proteins, it binds directly to 16S rRNA where it nucleates assembly of the body of the 30S subunit. Functionally, with S5 and S12 plays an important role in translational accuracy. This Xylella fastidiosa (strain M12) protein is Small ribosomal subunit protein uS4.